The chain runs to 476 residues: Bifunctional protein HldE (476 aa).

Positions 1 to 318 (MKPTLPNYDQ…AEAIHGSQDS (318 aa)) are ribokinase. An ATP-binding site is contributed by 195 to 198 (NMLE). Residue Asp264 is part of the active site. Residues 344 to 476 (MTNGCFDILH…IIEAIKGGRG (133 aa)) form a cytidylyltransferase region.

It in the N-terminal section; belongs to the carbohydrate kinase PfkB family. This sequence in the C-terminal section; belongs to the cytidylyltransferase family. As to quaternary structure, homodimer.

The catalysed reaction is D-glycero-beta-D-manno-heptose 7-phosphate + ATP = D-glycero-beta-D-manno-heptose 1,7-bisphosphate + ADP + H(+). It carries out the reaction D-glycero-beta-D-manno-heptose 1-phosphate + ATP + H(+) = ADP-D-glycero-beta-D-manno-heptose + diphosphate. The protein operates within nucleotide-sugar biosynthesis; ADP-L-glycero-beta-D-manno-heptose biosynthesis; ADP-L-glycero-beta-D-manno-heptose from D-glycero-beta-D-manno-heptose 7-phosphate: step 1/4. Its pathway is nucleotide-sugar biosynthesis; ADP-L-glycero-beta-D-manno-heptose biosynthesis; ADP-L-glycero-beta-D-manno-heptose from D-glycero-beta-D-manno-heptose 7-phosphate: step 3/4. In terms of biological role, catalyzes the phosphorylation of D-glycero-D-manno-heptose 7-phosphate at the C-1 position to selectively form D-glycero-beta-D-manno-heptose-1,7-bisphosphate. Functionally, catalyzes the ADP transfer from ATP to D-glycero-beta-D-manno-heptose 1-phosphate, yielding ADP-D-glycero-beta-D-manno-heptose. In Aliivibrio fischeri (strain MJ11) (Vibrio fischeri), this protein is Bifunctional protein HldE.